The following is a 299-amino-acid chain: 5-azacytidine resistance protein azr1 (299 aa).

Positions 35–293 (KSHFPSPATL…DDTTITCLLI (259 aa)) constitute a PPM-type phosphatase domain.

Functionally, confers azacytidine resistance in high copy. This chain is 5-azacytidine resistance protein azr1 (azr1), found in Schizosaccharomyces pombe (strain 972 / ATCC 24843) (Fission yeast).